Here is a 416-residue protein sequence, read N- to C-terminus: Alpha-1-antiproteinase (416 aa).

A signal peptide spans 1–24 (MALSITRGLLLLAALCCLAPISLA). N68, N105, N143, and N269 each carry an N-linked (GlcNAc...) asparagine glycan. An RCL region spans residues 371 to 390 (GSTFLEAIPMSLPPDVEFNR). At S381 the chain carries Phosphoserine.

It belongs to the serpin family. Interacts with CELA2A. Interacts with ERGIC3 and LMAN1/ERGIC53. Interacts with PRSS1/Trypsin. In terms of tissue distribution, plasma.

Its subcellular location is the secreted. Its function is as follows. Inhibitor of serine proteases. Its primary target is elastase, but it also has a moderate affinity for plasmin and thrombin. Inhibits trypsin, chymotrypsin and plasminogen activator. This is Alpha-1-antiproteinase (SERPINA1) from Bos taurus (Bovine).